We begin with the raw amino-acid sequence, 520 residues long: GMP synthase [glutamine-hydrolyzing] (520 aa).

The Glutamine amidotransferase type-1 domain maps to 9-202 (TVLIVDFGSQ…IHNIAGIKGD (194 aa)). The active-site Nucleophile is Cys86. Active-site residues include His176 and Glu178. The 193-residue stretch at 203–395 (WSMSAYRAKA…LGLPDSFIGR (193 aa)) folds into the GMPS ATP-PPase domain. An ATP-binding site is contributed by 230-236 (SGGVDSS).

As to quaternary structure, homodimer.

The catalysed reaction is XMP + L-glutamine + ATP + H2O = GMP + L-glutamate + AMP + diphosphate + 2 H(+). It participates in purine metabolism; GMP biosynthesis; GMP from XMP (L-Gln route): step 1/1. In terms of biological role, catalyzes the synthesis of GMP from XMP. The chain is GMP synthase [glutamine-hydrolyzing] from Rhizobium rhizogenes (strain K84 / ATCC BAA-868) (Agrobacterium radiobacter).